The primary structure comprises 236 residues: Urease accessory protein UreF (236 aa).

The protein belongs to the UreF family. UreD, UreF and UreG form a complex that acts as a GTP-hydrolysis-dependent molecular chaperone, activating the urease apoprotein by helping to assemble the nickel containing metallocenter of UreC. The UreE protein probably delivers the nickel.

The protein localises to the cytoplasm. Its function is as follows. Required for maturation of urease via the functional incorporation of the urease nickel metallocenter. The polypeptide is Urease accessory protein UreF (Synechocystis sp. (strain ATCC 27184 / PCC 6803 / Kazusa)).